A 214-amino-acid polypeptide reads, in one-letter code: Ceramide-1-phosphate transfer protein (214 aa).

An N-acylsphingoid base 1-phosphate contacts are provided by D56, K60, R106, R110, and H150.

Belongs to the GLTP family. As to expression, ubiquitous. Detected in heart, brain, placenta, lung, liver, skeletal muscle, kidney, pancreas, spleen, thymus, prostate, testis, ovary, small intestine, colon and peripheral blood leukocytes.

The protein localises to the cytoplasm. It localises to the cytosol. Its subcellular location is the golgi apparatus. The protein resides in the trans-Golgi network membrane. It is found in the cell membrane. The protein localises to the endosome membrane. It localises to the nucleus outer membrane. The enzyme catalyses N-(hexadecanoyl)-sphing-4-enine-1-phosphate(in) = N-(hexadecanoyl)-sphing-4-enine-1-phosphate(out). The catalysed reaction is N-(9Z-octadecenoyl)-sphing-4-enine-1-phosphate(in) = N-(9Z-octadecenoyl)-sphing-4-enine-1-phosphate(out). Its function is as follows. Mediates the intracellular transfer of ceramide-1-phosphate (C1P) between organelle membranes and the cell membrane. Required for normal structure of the Golgi stacks. Can bind phosphoceramides with a variety of aliphatic chains, but has a preference for lipids with saturated C16:0 or monounsaturated C18:1 aliphatic chains, and is inefficient with phosphoceramides containing lignoceryl (C24:0). Plays a role in the regulation of the cellular levels of ceramide-1-phosphate, and thereby contributes to the regulation of phospholipase PLA2G4A activity and the release of arachidonic acid. Has no activity with galactosylceramide, lactosylceramide, sphingomyelin, phosphatidylcholine, phosphatidic acid and ceramide. C1P transfer is stimulated by phosphatidylserine in C1P source vesicles. Regulates autophagy, inflammasome mediated IL1B and IL18 processing, and pyroptosis, but not apoptosis. This chain is Ceramide-1-phosphate transfer protein, found in Homo sapiens (Human).